The following is a 1041-amino-acid chain: Protein SMAX1-like (1041 aa).

The Clp R domain maps to 8–188 (IQQTLTPEAA…KSIIEQSLSA (181 aa)). Repeat stretches follow at residues 12 to 98 (LTPE…LDRL) and 117 to 188 (VSNA…SLSA). A compositionally biased stretch (low complexity) spans 189-205 (PSPCPSAAASTTTAGPG). 3 disordered regions span residues 189-214 (PSPC…PSPL), 482-513 (EAEQ…QNKA), and 889-913 (EGSH…VKRS). Basic and acidic residues predominate over residues 482 to 495 (EAEQTDKPASRPEA). Polar residues predominate over residues 891–900 (SHNSSDVSVE).

This sequence belongs to the ClpA/ClpB family.

In terms of biological role, may act downstream of MAX2 to negatively regulate karrikins/strigolactone responses. Acts probably specifically in the karrikin pathway. May function in a transcriptional corepressor complex. The protein is Protein SMAX1-like of Oryza sativa subsp. japonica (Rice).